Consider the following 211-residue polypeptide: Guanylate kinase (211 aa).

A Guanylate kinase-like domain is found at 7-185; that stretch reads GLLIVVTGPS…AVAELRAIIM (179 aa). Residue 14 to 21 coordinates ATP; that stretch reads GPSAVGKG.

Belongs to the guanylate kinase family.

It localises to the cytoplasm. The enzyme catalyses GMP + ATP = GDP + ADP. Its function is as follows. Essential for recycling GMP and indirectly, cGMP. The sequence is that of Guanylate kinase from Symbiobacterium thermophilum (strain DSM 24528 / JCM 14929 / IAM 14863 / T).